We begin with the raw amino-acid sequence, 195 residues long: Glycerol-3-phosphate acyltransferase 2 (195 aa).

Helical transmembrane passes span 4-24, 52-72, 73-93, 115-135, 150-170, and 171-191; these read VVSLAVVFVLSYLLGSLVAGV, GAAAAVTLADILKGAAAVGLA, LWLAPQALPLATALATFGVVF, AMLVVAPWTLLATVTFALALI, AIPFATVVAVPVGLLIASRLG, and GGAEFLAGSAAMGIRAVHLLA.

The protein belongs to the PlsY family. As to quaternary structure, probably interacts with PlsX.

It is found in the cell membrane. The enzyme catalyses an acyl phosphate + sn-glycerol 3-phosphate = a 1-acyl-sn-glycero-3-phosphate + phosphate. It participates in lipid metabolism; phospholipid metabolism. Functionally, catalyzes the transfer of an acyl group from acyl-phosphate (acyl-PO(4)) to glycerol-3-phosphate (G3P) to form lysophosphatidic acid (LPA). This enzyme utilizes acyl-phosphate as fatty acyl donor, but not acyl-CoA or acyl-ACP. In Deinococcus radiodurans (strain ATCC 13939 / DSM 20539 / JCM 16871 / CCUG 27074 / LMG 4051 / NBRC 15346 / NCIMB 9279 / VKM B-1422 / R1), this protein is Glycerol-3-phosphate acyltransferase 2.